The following is a 261-amino-acid chain: Precorrin-6A reductase (261 aa).

It belongs to the precorrin-6x reductase family.

It catalyses the reaction precorrin-6B + NADP(+) = precorrin-6A + NADPH + 2 H(+). It functions in the pathway cofactor biosynthesis; adenosylcobalamin biosynthesis; cob(II)yrinate a,c-diamide from precorrin-2 (aerobic route): step 6/10. In terms of biological role, catalyzes the reduction of the macrocycle of precorrin-6X into precorrin-6Y. In Sinorhizobium sp, this protein is Precorrin-6A reductase (cobK).